The following is a 316-amino-acid chain: 4-hydroxy-3-methylbut-2-enyl diphosphate reductase (316 aa).

Position 17 (C17) interacts with [4Fe-4S] cluster. Residues H46 and H79 each contribute to the (2E)-4-hydroxy-3-methylbut-2-enyl diphosphate site. 2 residues coordinate dimethylallyl diphosphate: H46 and H79. The isopentenyl diphosphate site is built by H46 and H79. Residue C101 participates in [4Fe-4S] cluster binding. H129 provides a ligand contact to (2E)-4-hydroxy-3-methylbut-2-enyl diphosphate. Position 129 (H129) interacts with dimethylallyl diphosphate. Residue H129 coordinates isopentenyl diphosphate. E131 functions as the Proton donor in the catalytic mechanism. Residue T170 coordinates (2E)-4-hydroxy-3-methylbut-2-enyl diphosphate. Residue C200 participates in [4Fe-4S] cluster binding. (2E)-4-hydroxy-3-methylbut-2-enyl diphosphate is bound by residues S228, S229, N230, and S273. Residues S228, S229, N230, and S273 each coordinate dimethylallyl diphosphate. Isopentenyl diphosphate contacts are provided by S228, S229, N230, and S273.

The protein belongs to the IspH family. It depends on [4Fe-4S] cluster as a cofactor.

The catalysed reaction is isopentenyl diphosphate + 2 oxidized [2Fe-2S]-[ferredoxin] + H2O = (2E)-4-hydroxy-3-methylbut-2-enyl diphosphate + 2 reduced [2Fe-2S]-[ferredoxin] + 2 H(+). The enzyme catalyses dimethylallyl diphosphate + 2 oxidized [2Fe-2S]-[ferredoxin] + H2O = (2E)-4-hydroxy-3-methylbut-2-enyl diphosphate + 2 reduced [2Fe-2S]-[ferredoxin] + 2 H(+). The protein operates within isoprenoid biosynthesis; dimethylallyl diphosphate biosynthesis; dimethylallyl diphosphate from (2E)-4-hydroxy-3-methylbutenyl diphosphate: step 1/1. It participates in isoprenoid biosynthesis; isopentenyl diphosphate biosynthesis via DXP pathway; isopentenyl diphosphate from 1-deoxy-D-xylulose 5-phosphate: step 6/6. In terms of biological role, catalyzes the conversion of 1-hydroxy-2-methyl-2-(E)-butenyl 4-diphosphate (HMBPP) into a mixture of isopentenyl diphosphate (IPP) and dimethylallyl diphosphate (DMAPP). Acts in the terminal step of the DOXP/MEP pathway for isoprenoid precursor biosynthesis. In Ruegeria pomeroyi (strain ATCC 700808 / DSM 15171 / DSS-3) (Silicibacter pomeroyi), this protein is 4-hydroxy-3-methylbut-2-enyl diphosphate reductase.